A 245-amino-acid polypeptide reads, in one-letter code: 7-cyano-7-deazaguanine synthase (245 aa).

19–29 (FSGGQDSATCL) contributes to the ATP binding site. Zn(2+)-binding residues include cysteine 207, cysteine 222, cysteine 225, and cysteine 228.

This sequence belongs to the QueC family. Requires Zn(2+) as cofactor.

The enzyme catalyses 7-carboxy-7-deazaguanine + NH4(+) + ATP = 7-cyano-7-deazaguanine + ADP + phosphate + H2O + H(+). It participates in purine metabolism; 7-cyano-7-deazaguanine biosynthesis. Functionally, catalyzes the ATP-dependent conversion of 7-carboxy-7-deazaguanine (CDG) to 7-cyano-7-deazaguanine (preQ(0)). The chain is 7-cyano-7-deazaguanine synthase from Gluconacetobacter diazotrophicus (strain ATCC 49037 / DSM 5601 / CCUG 37298 / CIP 103539 / LMG 7603 / PAl5).